Here is a 290-residue protein sequence, read N- to C-terminus: Thioredoxin-like protein 1 (290 aa).

The 81-residue stretch at 24-104 folds into the Thioredoxin domain; that stretch reads VDCYADWCGP…PQALKEKVAL (81 aa). A disulfide bridge connects residues C31 and C34. The PITH domain maps to 118 to 290; the sequence is SSSAPVKGFA…SKGKLQKVEA (173 aa).

The protein localises to the cytoplasm. The protein resides in the nucleus. In terms of biological role, has a role in cellular detoxification of alkyl hydroperoxide. This is Thioredoxin-like protein 1 (txl1) from Schizosaccharomyces pombe (strain 972 / ATCC 24843) (Fission yeast).